The sequence spans 141 residues: Heavy metal-associated isoprenylated plant protein 29 (141 aa).

The HMA domain maps to 1-59 (MEVPMDCPGCENKVRKALEKMNGVHDVQIDIKQQRVTVTGSAEQKKVLKVARNVTKRDI). Residues Cys-7 and Cys-10 each coordinate a metal cation. Cys-138 is modified (cysteine methyl ester). The S-farnesyl cysteine moiety is linked to residue Cys-138. Positions 139 to 141 (SIM) are cleaved as a propeptide — removed in mature form.

The protein belongs to the HIPP family.

In terms of biological role, heavy-metal-binding protein. This is Heavy metal-associated isoprenylated plant protein 29 from Arabidopsis thaliana (Mouse-ear cress).